A 256-amino-acid chain; its full sequence is 6-carboxyhexanoate--CoA ligase (256 aa).

Belongs to the BioW family. In terms of assembly, homodimer. Mg(2+) is required as a cofactor.

It carries out the reaction heptanedioate + ATP + CoA = 6-carboxyhexanoyl-CoA + AMP + diphosphate. Its pathway is metabolic intermediate metabolism; pimeloyl-CoA biosynthesis; pimeloyl-CoA from pimelate: step 1/1. Functionally, catalyzes the transformation of pimelate into pimeloyl-CoA with concomitant hydrolysis of ATP to AMP. In Methanobrevibacter ruminantium (strain ATCC 35063 / DSM 1093 / JCM 13430 / OCM 146 / M1) (Methanobacterium ruminantium), this protein is 6-carboxyhexanoate--CoA ligase.